The chain runs to 301 residues: Quinolinate synthase (301 aa).

Residues His21 and Ser38 each contribute to the iminosuccinate site. A [4Fe-4S] cluster-binding site is contributed by Cys83. Iminosuccinate-binding positions include 109-111 and Ser126; that span reads YIN. Cys169 contacts [4Fe-4S] cluster. Iminosuccinate-binding positions include 195–197 and Thr212; that span reads HPE. [4Fe-4S] cluster is bound at residue Cys257.

The protein belongs to the quinolinate synthase family. Type 2 subfamily. It depends on [4Fe-4S] cluster as a cofactor.

The protein resides in the cytoplasm. The catalysed reaction is iminosuccinate + dihydroxyacetone phosphate = quinolinate + phosphate + 2 H2O + H(+). Its pathway is cofactor biosynthesis; NAD(+) biosynthesis; quinolinate from iminoaspartate: step 1/1. In terms of biological role, catalyzes the condensation of iminoaspartate with dihydroxyacetone phosphate to form quinolinate. This Clostridium perfringens (strain SM101 / Type A) protein is Quinolinate synthase.